We begin with the raw amino-acid sequence, 282 residues long: Bifunctional protein FolD (282 aa).

Residues 164–166 (GAS), isoleucine 189, and isoleucine 230 contribute to the NADP(+) site.

The protein belongs to the tetrahydrofolate dehydrogenase/cyclohydrolase family. As to quaternary structure, homodimer.

It catalyses the reaction (6R)-5,10-methylene-5,6,7,8-tetrahydrofolate + NADP(+) = (6R)-5,10-methenyltetrahydrofolate + NADPH. It carries out the reaction (6R)-5,10-methenyltetrahydrofolate + H2O = (6R)-10-formyltetrahydrofolate + H(+). Its pathway is one-carbon metabolism; tetrahydrofolate interconversion. Catalyzes the oxidation of 5,10-methylenetetrahydrofolate to 5,10-methenyltetrahydrofolate and then the hydrolysis of 5,10-methenyltetrahydrofolate to 10-formyltetrahydrofolate. This Campylobacter jejuni (strain RM1221) protein is Bifunctional protein FolD.